The following is a 256-amino-acid chain: Imidazole glycerol phosphate synthase subunit HisF (256 aa).

Residues aspartate 11 and aspartate 130 contribute to the active site.

The protein belongs to the HisA/HisF family. Heterodimer of HisH and HisF.

The protein resides in the cytoplasm. It catalyses the reaction 5-[(5-phospho-1-deoxy-D-ribulos-1-ylimino)methylamino]-1-(5-phospho-beta-D-ribosyl)imidazole-4-carboxamide + L-glutamine = D-erythro-1-(imidazol-4-yl)glycerol 3-phosphate + 5-amino-1-(5-phospho-beta-D-ribosyl)imidazole-4-carboxamide + L-glutamate + H(+). It functions in the pathway amino-acid biosynthesis; L-histidine biosynthesis; L-histidine from 5-phospho-alpha-D-ribose 1-diphosphate: step 5/9. Functionally, IGPS catalyzes the conversion of PRFAR and glutamine to IGP, AICAR and glutamate. The HisF subunit catalyzes the cyclization activity that produces IGP and AICAR from PRFAR using the ammonia provided by the HisH subunit. The polypeptide is Imidazole glycerol phosphate synthase subunit HisF (Prochlorococcus marinus (strain NATL2A)).